The sequence spans 87 residues: Small ribosomal subunit protein eS21 (87 aa).

The protein belongs to the eukaryotic ribosomal protein eS21 family. In terms of assembly, component of the small ribosomal subunit (SSU). Mature N.crassa ribosomes consist of a small (40S) and a large (60S) subunit. The 40S small subunit contains 1 molecule of ribosomal RNA (18S rRNA) and at least 32 different proteins. The large 60S subunit contains 3 rRNA molecules (26S, 5.8S and 5S rRNA) and at least 42 different proteins.

The protein resides in the cytoplasm. Functionally, component of the ribosome, a large ribonucleoprotein complex responsible for the synthesis of proteins in the cell. The small ribosomal subunit (SSU) binds messenger RNAs (mRNAs) and translates the encoded message by selecting cognate aminoacyl-transfer RNA (tRNA) molecules. The large subunit (LSU) contains the ribosomal catalytic site termed the peptidyl transferase center (PTC), which catalyzes the formation of peptide bonds, thereby polymerizing the amino acids delivered by tRNAs into a polypeptide chain. The nascent polypeptides leave the ribosome through a tunnel in the LSU and interact with protein factors that function in enzymatic processing, targeting, and the membrane insertion of nascent chains at the exit of the ribosomal tunnel. This chain is Small ribosomal subunit protein eS21 (crp-7), found in Neurospora crassa (strain ATCC 24698 / 74-OR23-1A / CBS 708.71 / DSM 1257 / FGSC 987).